Reading from the N-terminus, the 497-residue chain is 3-octaprenyl-4-hydroxybenzoate carboxy-lyase (497 aa).

N172 is a binding site for Mn(2+). Prenylated FMN is bound by residues I175 to R177, R189 to L191, and R194 to G195. Mn(2+) is bound at residue E238. Residue D287 is the Proton donor of the active site.

It belongs to the UbiD family. In terms of assembly, homohexamer. Requires prenylated FMN as cofactor. Mn(2+) serves as cofactor.

Its subcellular location is the cell membrane. It carries out the reaction a 4-hydroxy-3-(all-trans-polyprenyl)benzoate + H(+) = a 2-(all-trans-polyprenyl)phenol + CO2. The protein operates within cofactor biosynthesis; ubiquinone biosynthesis. In terms of biological role, catalyzes the decarboxylation of 3-octaprenyl-4-hydroxy benzoate to 2-octaprenylphenol, an intermediate step in ubiquinone biosynthesis. The polypeptide is 3-octaprenyl-4-hydroxybenzoate carboxy-lyase (Enterobacter sp. (strain 638)).